Reading from the N-terminus, the 558-residue chain is Dihydroxy-acid dehydratase (558 aa).

A Mg(2+)-binding site is contributed by Asp-81. Cys-122 is a [2Fe-2S] cluster binding site. Mg(2+) is bound by residues Asp-123 and Lys-124. Position 124 is an N6-carboxylysine (Lys-124). Cys-195 contacts [2Fe-2S] cluster. Glu-447 provides a ligand contact to Mg(2+). The active-site Proton acceptor is Ser-473.

Belongs to the IlvD/Edd family. In terms of assembly, homodimer. Requires [2Fe-2S] cluster as cofactor. The cofactor is Mg(2+).

It carries out the reaction (2R)-2,3-dihydroxy-3-methylbutanoate = 3-methyl-2-oxobutanoate + H2O. It catalyses the reaction (2R,3R)-2,3-dihydroxy-3-methylpentanoate = (S)-3-methyl-2-oxopentanoate + H2O. The protein operates within amino-acid biosynthesis; L-isoleucine biosynthesis; L-isoleucine from 2-oxobutanoate: step 3/4. Its pathway is amino-acid biosynthesis; L-valine biosynthesis; L-valine from pyruvate: step 3/4. Functionally, functions in the biosynthesis of branched-chain amino acids. Catalyzes the dehydration of (2R,3R)-2,3-dihydroxy-3-methylpentanoate (2,3-dihydroxy-3-methylvalerate) into 2-oxo-3-methylpentanoate (2-oxo-3-methylvalerate) and of (2R)-2,3-dihydroxy-3-methylbutanoate (2,3-dihydroxyisovalerate) into 2-oxo-3-methylbutanoate (2-oxoisovalerate), the penultimate precursor to L-isoleucine and L-valine, respectively. This chain is Dihydroxy-acid dehydratase, found in Bacillus subtilis (strain 168).